The chain runs to 97 residues: Protein MxiI (97 aa).

It to S.typhimurium PrgJ.

Functionally, necessary for the secretion of IPA invasins. This chain is Protein MxiI (mxiI), found in Shigella flexneri.